A 170-amino-acid chain; its full sequence is Large ribosomal subunit protein uL10 (170 aa).

It belongs to the universal ribosomal protein uL10 family. In terms of assembly, part of the ribosomal stalk of the 50S ribosomal subunit. The N-terminus interacts with L11 and the large rRNA to form the base of the stalk. The C-terminus forms an elongated spine to which L12 dimers bind in a sequential fashion forming a multimeric L10(L12)X complex.

Forms part of the ribosomal stalk, playing a central role in the interaction of the ribosome with GTP-bound translation factors. This Chlamydia caviae (strain ATCC VR-813 / DSM 19441 / 03DC25 / GPIC) (Chlamydophila caviae) protein is Large ribosomal subunit protein uL10.